The following is a 290-amino-acid chain: uncharacterized protein (290 aa).

This is an uncharacterized protein from Lepidoptera (butterflies and moths).